The sequence spans 905 residues: Protein translocase subunit SecA (905 aa).

Residues Q87, 105 to 109 (GEGKT), and D512 contribute to the ATP site. Positions 565 to 584 (RRIDNQLRGRSGRQGDPGSS) are disordered. Zn(2+) contacts are provided by C886, C888, C897, and H898.

It belongs to the SecA family. Monomer and homodimer. Part of the essential Sec protein translocation apparatus which comprises SecA, SecYEG and auxiliary proteins SecDF-YajC and YidC. Zn(2+) serves as cofactor.

It is found in the cell inner membrane. It localises to the cytoplasm. It catalyses the reaction ATP + H2O + cellular proteinSide 1 = ADP + phosphate + cellular proteinSide 2.. Part of the Sec protein translocase complex. Interacts with the SecYEG preprotein conducting channel. Has a central role in coupling the hydrolysis of ATP to the transfer of proteins into and across the cell membrane, serving both as a receptor for the preprotein-SecB complex and as an ATP-driven molecular motor driving the stepwise translocation of polypeptide chains across the membrane. The protein is Protein translocase subunit SecA of Haemophilus ducreyi (strain 35000HP / ATCC 700724).